Here is a 261-residue protein sequence, read N- to C-terminus: Ethanolamine ammonia-lyase small subunit (261 aa).

Adenosylcob(III)alamin is bound by residues Val158, Glu179, and Cys208.

This sequence belongs to the EutC family. The basic unit is a heterodimer which dimerizes to form tetramers. The heterotetramers trimerize; 6 large subunits form a core ring with 6 small subunits projecting outwards. Adenosylcob(III)alamin serves as cofactor.

It is found in the bacterial microcompartment. It carries out the reaction ethanolamine = acetaldehyde + NH4(+). It participates in amine and polyamine degradation; ethanolamine degradation. Functionally, catalyzes the deamination of various vicinal amino-alcohols to oxo compounds. Allows this organism to utilize ethanolamine as the sole source of nitrogen and carbon in the presence of external vitamin B12. This is Ethanolamine ammonia-lyase small subunit from Bradyrhizobium diazoefficiens (strain JCM 10833 / BCRC 13528 / IAM 13628 / NBRC 14792 / USDA 110).